Here is a 103-residue protein sequence, read N- to C-terminus: Large ribosomal subunit protein bL21 (103 aa).

It belongs to the bacterial ribosomal protein bL21 family. In terms of assembly, part of the 50S ribosomal subunit. Contacts protein L20.

In terms of biological role, this protein binds to 23S rRNA in the presence of protein L20. The chain is Large ribosomal subunit protein bL21 from Klebsiella pneumoniae (strain 342).